Consider the following 473-residue polypeptide: Lysophospholipid acyltransferase 5 (473 aa).

A run of 4 helical transmembrane segments spans residues 20–40 (LLIS…FFYN), 43–63 (AQHQ…FNCG), 66–86 (VIHP…MAGT), and 88–108 (ASIY…YWFH). Active-site residues include N315 and H351. Helical transmembrane passes span 341-361 (VITL…FLLF), 396-416 (FIWI…FLMF), and 431-451 (LYFI…MVLL). The Di-lysine motif motif lies at 470–473 (KKEL).

This sequence belongs to the membrane-bound acyltransferase family.

Its subcellular location is the endoplasmic reticulum membrane. It catalyses the reaction a 1-acyl-sn-glycero-3-phosphocholine + an acyl-CoA = a 1,2-diacyl-sn-glycero-3-phosphocholine + CoA. The enzyme catalyses a 1-acyl-sn-glycero-3-phospho-L-serine + an acyl-CoA = a 1,2-diacyl-sn-glycero-3-phospho-L-serine + CoA. The catalysed reaction is a 1-acyl-sn-glycero-3-phosphoethanolamine + an acyl-CoA = a 1,2-diacyl-sn-glycero-3-phosphoethanolamine + CoA. It participates in lipid metabolism; phospholipid metabolism. Probable acyltransferase which may mediate the conversion of lysophosphatidylcholine (1-acyl-sn-glycero-3-phosphocholine or LPC) into phosphatidylcholine (1,2-diacyl-sn-glycero-3-phosphocholine or PC) (LPCAT activity). May also catalyze the conversion of lysophosphatidylethanolamine (1-acyl-2-hydroxy-sn-glycero-3-phosphoethanolamine or LPE) into phosphatidylethanolamine (1,2-diacyl-sn-glycero-3-phosphoethanolamine or PE) (LPEAT activity), as well as the conversion of lysophosphatidylserine (1-acyl-2-hydroxy-sn-glycero-3-phospho-L-serine or LPS) into phosphatidylserine (1,2-diacyl-sn-glycero-3-phospho-L-serine or PS) (LPSAT activity). Required for incorporation of arachidonic acid into PC, PE, and PS. The chain is Lysophospholipid acyltransferase 5 (mboa-6) from Caenorhabditis elegans.